A 342-amino-acid polypeptide reads, in one-letter code: uncharacterized protein (342 aa).

This sequence belongs to the cycloisomerase 2 family.

This is an uncharacterized protein from Staphylococcus aureus (strain MSSA476).